A 394-amino-acid polypeptide reads, in one-letter code: MAKAKFERSKPHVNVGTIGHVDHGKTTLTAAISHVLAKTYGGEAKDFSQIDNAPEERERGITINTSHIEYDTPSRHYAHVDCPGHADYVKNMITGAAQMDGAILVVASTDGPMPQTREHILLSRQVGVPFIIVFMNKCDMVDDAELLELVEMEVRELLSEYDFPGDDLPVIQGSALKALEGEPEWEAKILELAAALDSYIPEPERDIDKPFLMPIEDVFSISGRGTVVTGRVERGIVRVGDEVEIVGIRTTTKTTCTGVEMFRKLLDEGRAGENCGILLRGTKRDDVERGQVLSKPGSINPHTTFESEVYVLSKEEGGRHTPFFKGYRPQFYFRTTDVTGTIELPEGVEMVMPGDNIKMVVTLICPIAMDEGLRFAIREGGRTVGAGVVAKIIA.

In terms of domain architecture, tr-type G spans 10–204 (KPHVNVGTIG…ALDSYIPEPE (195 aa)). The segment at 19–26 (GHVDHGKT) is G1. A GTP-binding site is contributed by 19–26 (GHVDHGKT). Thr26 lines the Mg(2+) pocket. Residues 60-64 (GITIN) form a G2 region. The interval 81–84 (DCPG) is G3. GTP is bound by residues 81–85 (DCPGH) and 136–139 (NKCD). A G4 region spans residues 136–139 (NKCD). Positions 174 to 176 (SAL) are G5.

It belongs to the TRAFAC class translation factor GTPase superfamily. Classic translation factor GTPase family. EF-Tu/EF-1A subfamily. In terms of assembly, monomer.

Its subcellular location is the cytoplasm. It catalyses the reaction GTP + H2O = GDP + phosphate + H(+). In terms of biological role, GTP hydrolase that promotes the GTP-dependent binding of aminoacyl-tRNA to the A-site of ribosomes during protein biosynthesis. This Shewanella oneidensis (strain ATCC 700550 / JCM 31522 / CIP 106686 / LMG 19005 / NCIMB 14063 / MR-1) protein is Elongation factor Tu 2.